A 213-amino-acid polypeptide reads, in one-letter code: Isopentenyl-diphosphate Delta-isomerase (213 aa).

Positions 1 to 10 are enriched in basic and acidic residues; it reads MRDSMSEADR. The disordered stretch occupies residues 1–34; the sequence is MRDSMSEADRSSPGSGKTDREDETAENATQDVIA. Mn(2+) contacts are provided by histidine 51, histidine 58, and histidine 95. The Nudix hydrolase domain maps to 56-193; it reads VRHRAFTCLL…RQLRLCPWFE (138 aa). Glutamate 113 provides a ligand contact to Mg(2+). 2 residues coordinate Mn(2+): glutamate 142 and glutamate 144. Residue glutamate 144 is part of the active site.

The protein belongs to the IPP isomerase type 1 family. Mg(2+) serves as cofactor. It depends on Mn(2+) as a cofactor.

The protein resides in the cytoplasm. The enzyme catalyses isopentenyl diphosphate = dimethylallyl diphosphate. Its pathway is isoprenoid biosynthesis; dimethylallyl diphosphate biosynthesis; dimethylallyl diphosphate from isopentenyl diphosphate: step 1/1. In terms of biological role, catalyzes the 1,3-allylic rearrangement of the homoallylic substrate isopentenyl (IPP) to its highly electrophilic allylic isomer, dimethylallyl diphosphate (DMAPP). This is Isopentenyl-diphosphate Delta-isomerase from Halobacterium salinarum (strain ATCC 700922 / JCM 11081 / NRC-1) (Halobacterium halobium).